Reading from the N-terminus, the 210-residue chain is Na(+)-translocating NADH-quinone reductase subunit D (210 aa).

6 consecutive transmembrane segments (helical) span residues 9-29 (SVLIGPIVSNNPIALQILGVC), 42-62 (LVMTIALTAVCALSNLFISLI), 72-92 (IIVQMTIIASLVIVVDQVLQA), 103-123 (VFVGLIITNCIVMGRAEAFAM), 131-151 (FMDGLGNGLGYGAILLSVGFV), and 178-198 (NGLLLLPPSAFFLIGALIWII).

This sequence belongs to the NqrDE/RnfAE family. In terms of assembly, composed of six subunits; NqrA, NqrB, NqrC, NqrD, NqrE and NqrF.

It is found in the cell inner membrane. The catalysed reaction is a ubiquinone + n Na(+)(in) + NADH + H(+) = a ubiquinol + n Na(+)(out) + NAD(+). Functionally, NQR complex catalyzes the reduction of ubiquinone-1 to ubiquinol by two successive reactions, coupled with the transport of Na(+) ions from the cytoplasm to the periplasm. NqrA to NqrE are probably involved in the second step, the conversion of ubisemiquinone to ubiquinol. This is Na(+)-translocating NADH-quinone reductase subunit D from Shewanella piezotolerans (strain WP3 / JCM 13877).